A 277-amino-acid chain; its full sequence is DNA-binding transcriptional activator MhpR (277 aa).

One can recognise an HTH iclR-type domain in the interval 12–74 (VRGLTRGLML…PSDDSFRLTI (63 aa)). The segment at residues 34-53 (VGLLAELSGLHRTTVRRLLE) is a DNA-binding region (H-T-H motif). In terms of domain architecture, IclR-ED spans 89 to 262 (ISALAAPLLG…AKQIEEGVES (174 aa)).

Activator of the mhpABCDFE operon coding for components of the 3-hydroxyphenylpropionate degradation pathway. The chain is DNA-binding transcriptional activator MhpR (mhpR) from Escherichia coli (strain K12).